We begin with the raw amino-acid sequence, 153 residues long: SsrA-binding protein (153 aa).

This sequence belongs to the SmpB family.

Its subcellular location is the cytoplasm. Its function is as follows. Required for rescue of stalled ribosomes mediated by trans-translation. Binds to transfer-messenger RNA (tmRNA), required for stable association of tmRNA with ribosomes. tmRNA and SmpB together mimic tRNA shape, replacing the anticodon stem-loop with SmpB. tmRNA is encoded by the ssrA gene; the 2 termini fold to resemble tRNA(Ala) and it encodes a 'tag peptide', a short internal open reading frame. During trans-translation Ala-aminoacylated tmRNA acts like a tRNA, entering the A-site of stalled ribosomes, displacing the stalled mRNA. The ribosome then switches to translate the ORF on the tmRNA; the nascent peptide is terminated with the 'tag peptide' encoded by the tmRNA and targeted for degradation. The ribosome is freed to recommence translation, which seems to be the essential function of trans-translation. This chain is SsrA-binding protein, found in Orientia tsutsugamushi (strain Ikeda) (Rickettsia tsutsugamushi).